Reading from the N-terminus, the 308-residue chain is Aspartate carbamoyltransferase catalytic subunit (308 aa).

Positions 57 and 58 each coordinate carbamoyl phosphate. Lys-86 serves as a coordination point for L-aspartate. Carbamoyl phosphate is bound by residues Arg-107, His-135, and Gln-138. The L-aspartate site is built by Arg-168 and Arg-228. Carbamoyl phosphate is bound by residues Leu-267 and Pro-268.

This sequence belongs to the aspartate/ornithine carbamoyltransferase superfamily. ATCase family. In terms of assembly, heterododecamer (2C3:3R2) of six catalytic PyrB chains organized as two trimers (C3), and six regulatory PyrI chains organized as three dimers (R2).

It carries out the reaction carbamoyl phosphate + L-aspartate = N-carbamoyl-L-aspartate + phosphate + H(+). The protein operates within pyrimidine metabolism; UMP biosynthesis via de novo pathway; (S)-dihydroorotate from bicarbonate: step 2/3. In terms of biological role, catalyzes the condensation of carbamoyl phosphate and aspartate to form carbamoyl aspartate and inorganic phosphate, the committed step in the de novo pyrimidine nucleotide biosynthesis pathway. The protein is Aspartate carbamoyltransferase catalytic subunit of Leptospira interrogans serogroup Icterohaemorrhagiae serovar Lai (strain 56601).